We begin with the raw amino-acid sequence, 203 residues long: Peptidyl-tRNA hydrolase (203 aa).

Tyr14 provides a ligand contact to tRNA. His19 serves as the catalytic Proton acceptor. Tyr64, Asn66, and Asn112 together coordinate tRNA.

Belongs to the PTH family. In terms of assembly, monomer.

It localises to the cytoplasm. It carries out the reaction an N-acyl-L-alpha-aminoacyl-tRNA + H2O = an N-acyl-L-amino acid + a tRNA + H(+). Hydrolyzes ribosome-free peptidyl-tRNAs (with 1 or more amino acids incorporated), which drop off the ribosome during protein synthesis, or as a result of ribosome stalling. Functionally, catalyzes the release of premature peptidyl moieties from peptidyl-tRNA molecules trapped in stalled 50S ribosomal subunits, and thus maintains levels of free tRNAs and 50S ribosomes. The chain is Peptidyl-tRNA hydrolase from Methylobacterium nodulans (strain LMG 21967 / CNCM I-2342 / ORS 2060).